Here is a 652-residue protein sequence, read N- to C-terminus: Probable potassium transport system protein Kup (652 aa).

Low complexity predominate over residues 1-20 (MSNDTSPGTSSVDSKSSDPS). The interval 1 to 26 (MSNDTSPGTSSVDSKSSDPSYGVPGH) is disordered. A run of 12 helical transmembrane segments spans residues 36–56 (LSLG…LYAL), 76–96 (LVSL…VMFI), 125–145 (WLIV…MITP), 161–181 (PSFD…LFCI), 193–213 (FGPI…FNII), 228–248 (AIHF…SVVL), 270–290 (LGWY…QCAL), 314–334 (LIIL…TGAF), 362–382 (IYIP…IAMF), 391–411 (AYGI…GVLV), 419–439 (AWQS…FFLS), and 444–464 (IPEG…MLMT).

This sequence belongs to the HAK/KUP transporter (TC 2.A.72) family.

The protein resides in the cell inner membrane. The catalysed reaction is K(+)(in) + H(+)(in) = K(+)(out) + H(+)(out). Transport of potassium into the cell. Likely operates as a K(+):H(+) symporter. This is Probable potassium transport system protein Kup from Zymomonas mobilis subsp. mobilis (strain ATCC 31821 / ZM4 / CP4).